The sequence spans 290 residues: N-acetylmannosamine kinase (290 aa).

ATP-binding positions include A5–K12 and G132–S139. H156, C166, C168, and C173 together coordinate Zn(2+).

This sequence belongs to the ROK (NagC/XylR) family. NanK subfamily. In terms of assembly, homodimer.

The enzyme catalyses an N-acyl-D-mannosamine + ATP = an N-acyl-D-mannosamine 6-phosphate + ADP + H(+). It functions in the pathway amino-sugar metabolism; N-acetylneuraminate degradation; D-fructose 6-phosphate from N-acetylneuraminate: step 2/5. Its function is as follows. Catalyzes the phosphorylation of N-acetylmannosamine (ManNAc) to ManNAc-6-P. The chain is N-acetylmannosamine kinase from Citrobacter koseri (strain ATCC BAA-895 / CDC 4225-83 / SGSC4696).